We begin with the raw amino-acid sequence, 510 residues long: Maturase K (510 aa).

Belongs to the intron maturase 2 family. MatK subfamily.

The protein resides in the plastid. In terms of biological role, usually encoded in the trnK tRNA gene intron. Probably assists in splicing its own and other chloroplast group II introns. The sequence is that of Maturase K from Aneura mirabilis (Parasitic liverwort).